A 655-amino-acid chain; its full sequence is MLPNFAVLPPEVNSARVFAGAGSAPMLAAAAAWDDLASELHCAAMSFGSVTSGLVVGWWQGSASAAMVDAAASYIGWLSTSAAHAEGAAGLARAAVSVFEEALAATVHPAMVAANRAQVASLVASNLFGQNAPAIAALESLYECMWAQDAAAMAGYYVGASAVATQLASWLQRLQSIPGAASLDARLPSSAEAPMGVVRAVNSAIAANAAAAQTVGLVMGGSGTPIPSARYVELANALYMSGSVPGVIAQALFTPQGLYPVVVIKNLTFDSSVAQGAVILESAIRQQIAAGNNVTVFGYSQSATISSLVMANLAASADPPSPDELSFTLIGNPNNPNGGVATRFPGISFPSLGVTATGATPHNLYPTKIYTIEYDGVADFPRYPLNFVSTLNAIAGTYYVHSNYFILTPEQIDAAVPLTNTVGPTMTQYYIIRTENLPLLEPLRSVPIVGNPLANLVQPNLKVIVNLGYGDPAYGYSTSPPNVATPFGLFPEVSPVVIADALVAGTQQGIGDFAYDVSHLELPLPADGSTMPSTAPGSGTPVPPLSIDSLIDDLQVANRNLANTISKVAATSYATVLPTADIANAALTIVPSYNIHLFLEGIQQALKGDPMGLVNAVGYPLAADVALFTAAGGLQLLIIISAGRTIANDISAIVP.

Residues 245-469 (PGVIAQALFT…NLKVIVNLGY (225 aa)) enclose the PE-PPE domain.

The protein belongs to the mycobacterial PPE family.

This is an uncharacterized protein from Mycobacterium tuberculosis (strain ATCC 25618 / H37Rv).